Reading from the N-terminus, the 296-residue chain is Probable 2-(5''-triphosphoribosyl)-3'-dephosphocoenzyme-A synthase (296 aa).

The protein belongs to the CitG/MdcB family.

It carries out the reaction 3'-dephospho-CoA + ATP = 2'-(5''-triphospho-alpha-D-ribosyl)-3'-dephospho-CoA + adenine. The sequence is that of Probable 2-(5''-triphosphoribosyl)-3'-dephosphocoenzyme-A synthase from Streptococcus mutans serotype c (strain ATCC 700610 / UA159).